Consider the following 532-residue polypeptide: Flavin-containing monooxygenase 1 (532 aa).

Position 2 is an N-acetylalanine (alanine 2). The Lumenal portion of the chain corresponds to 2–510 (AKRVAIVGAG…TRIVQESPTP (509 aa)). FAD contacts are provided by residues 9–13 (GAGVS), glutamate 32, 40–41 (LW), and 61–62 (NS). Residues 60–61 (SN) and 195–198 (SGTD) each bind NADP(+). The chain crosses the membrane as a helical span at residues 511–531 (FASLLKLLSLLALLMAIFLIF). Position 532 (leucine 532) is a topological domain, cytoplasmic.

Belongs to the FMO family. Requires FAD as cofactor. Liver.

The protein resides in the endoplasmic reticulum membrane. It carries out the reaction hypotaurine + NADPH + O2 + H(+) = taurine + NADP(+) + H2O. The enzyme catalyses hypotaurine + NADH + O2 + H(+) = taurine + NAD(+) + H2O. It catalyses the reaction trimethylamine + NADPH + O2 = trimethylamine N-oxide + NADP(+) + H2O. The catalysed reaction is N,N-dimethylaniline + NADPH + O2 + H(+) = N,N-dimethylaniline N-oxide + NADP(+) + H2O. Functionally, broad spectrum monooxygenase that catalyzes the oxygenation of a wide variety of nitrogen- and sulfur-containing compounds including xenobiotics. Catalyzes the S-oxygenation of hypotaurine to produce taurine, an organic osmolyte involved in cell volume regulation as well as a variety of cytoprotective and developmental processes. In vitro, catalyzes the N-oxygenation of trimethylamine (TMA) to produce trimethylamine N-oxide (TMAO) and could therefore participate to the detoxification of this compound that is generated by the action of gut microbiota from dietary precursors such as choline, choline containing compounds, betaine or L-carnitine. This is Flavin-containing monooxygenase 1 (FMO1) from Canis lupus familiaris (Dog).